The following is a 169-amino-acid chain: Calcium-binding protein G (169 aa).

4 consecutive EF-hand domains span residues 9–44, 60–83, 92–127, and 133–162; these read KIFQ…KMNG, VDMD…QAKK, AALA…QGYN, and DYVL…KRLA. Ca(2+) is bound by residues Asp-105, Asp-107, Asp-109, Lys-111, Glu-116, Asp-140, Asp-142, Asp-144, Tyr-146, and Glu-151.

This chain is Calcium-binding protein G (cbpG), found in Dictyostelium discoideum (Social amoeba).